Consider the following 61-residue polypeptide: Small ribosomal subunit protein uS14 (61 aa).

4 residues coordinate Zn(2+): C24, C27, C40, and C43.

It belongs to the universal ribosomal protein uS14 family. Zinc-binding uS14 subfamily. In terms of assembly, part of the 30S ribosomal subunit. Contacts proteins S3 and S10. The cofactor is Zn(2+).

Binds 16S rRNA, required for the assembly of 30S particles and may also be responsible for determining the conformation of the 16S rRNA at the A site. This is Small ribosomal subunit protein uS14 from Streptococcus thermophilus (strain ATCC BAA-491 / LMD-9).